The chain runs to 130 residues: MSRPTGPQFWPPFKPCPCGSGRSYAACCQPFHTGERDAPTPEALMRSRYAAYALADADYVRRTWHPDTVPAELDLNDGVKYTGLRIHRAEGDEVEFTASMKGPDGQPHNMRERSRFVQLDGRWVYLDAAE.

This sequence belongs to the UPF0225 family.

This Deinococcus radiodurans (strain ATCC 13939 / DSM 20539 / JCM 16871 / CCUG 27074 / LMG 4051 / NBRC 15346 / NCIMB 9279 / VKM B-1422 / R1) protein is UPF0225 protein DR_0483.